A 96-amino-acid chain; its full sequence is Protein RnfH (96 aa).

This sequence belongs to the UPF0125 (RnfH) family.

The chain is Protein RnfH from Escherichia fergusonii (strain ATCC 35469 / DSM 13698 / CCUG 18766 / IAM 14443 / JCM 21226 / LMG 7866 / NBRC 102419 / NCTC 12128 / CDC 0568-73).